Reading from the N-terminus, the 59-residue chain is Large ribosomal subunit protein bL32 (59 aa).

The segment at 1–59 (MAVQQNKKSPSKRGMHRSHDFLTTSPLAVEPSTGEVHLRHHISPNGYYRGKKVVKTKND) is disordered. Residues 49 to 59 (RGKKVVKTKND) show a composition bias toward basic residues.

Belongs to the bacterial ribosomal protein bL32 family.

This is Large ribosomal subunit protein bL32 from Burkholderia mallei (strain NCTC 10247).